A 222-amino-acid polypeptide reads, in one-letter code: Charged multivesicular body protein 3 (222 aa).

A lipid anchor (N-myristoyl glycine) is attached at Gly2. The interval 2 to 113 is intramolecular interaction with C-terminus; the sequence is GLFGKTQEKP…LQKSTEVMKA (112 aa). Positions 22–54 form a coiled coil; sequence KIRKEMRVVDRQIRDIQREEEKVKRSVKDAAKK. 2 important for autoinhibitory function regions span residues 59–64 and 168–169; these read VCVVLA and IL. Residues 141-222 adopt a coiled-coil conformation; that stretch reads EEMLEDTFES…MQSRLATLRS (82 aa). An intramolecular interaction with N-terminus region spans residues 151–220; that stretch reads MDDQEEMEEE…EAMQSRLATL (70 aa). The tract at residues 151 to 222 is interaction with VPS4A; sequence MDDQEEMEEE…MQSRLATLRS (72 aa). A Glycyl lysine isopeptide (Lys-Gly) (interchain with G-Cter in ubiquitin) cross-link involves residue Lys179. Residues 180-222 form a disordered region; sequence APSKVTDALPEPEPSGAMAASEDEEEEEEALEAMQSRLATLRS. 3 interaction with STAMBP regions span residues 196–222, 203–207, and 221–222; these read AMAASEDEEEEEEALEAMQSRLATLRS, EEEEE, and RS. Ser200 carries the phosphoserine modification. Acidic residues predominate over residues 200–210; it reads SEDEEEEEEAL. The MIT-interacting motif motif lies at 201–211; it reads EDEEEEEEALE.

Belongs to the SNF7 family. As to quaternary structure, probable core component of the endosomal sorting required for transport complex III (ESCRT-III). ESCRT-III components are thought to multimerize to form a flat lattice on the perimeter membrane of the endosome. Several assembly forms of ESCRT-III may exist that interact and act sequentially. Forms a metastable monomer in solution; its core structure (without part of the putative autoinhibitory C-terminal acidic region) oligomerizes into a flat lattice via two different dimerization interfaces. In vitro, heteromerizes with CHMP2A (but not CHMP4) to form helical tubular structures that expose membrane-interacting sites on the outside whereas VPS4B can associate on the inside of the tubule. May interact with IGFBP7; the relevance of such interaction however remains unclear. Interacts with CHMP2A. Interacts with CHMP4A; the interaction requires the release of CHMP4A autoinhibition. Interacts with VPS4A. Interacts with STAMBP; the interaction appears to relieve the autoinhibition of CHMP3. Interacts with VTA1.

Its subcellular location is the cytoplasm. The protein resides in the cytosol. It is found in the membrane. The protein localises to the endosome. It localises to the late endosome membrane. Its function is as follows. Probable core component of the endosomal sorting required for transport complex III (ESCRT-III) which is involved in multivesicular bodies (MVBs) formation and sorting of endosomal cargo proteins into MVBs. MVBs contain intraluminal vesicles (ILVs) that are generated by invagination and scission from the limiting membrane of the endosome and mostly are delivered to lysosomes enabling degradation of membrane proteins, such as stimulated growth factor receptors, lysosomal enzymes and lipids. The MVB pathway appears to require the sequential function of ESCRT-O, -I,-II and -III complexes. ESCRT-III proteins mostly dissociate from the invaginating membrane before the ILV is released. The ESCRT machinery also functions in topologically equivalent membrane fission events, such as the terminal stages of cytokinesis and the budding of enveloped viruses (lentiviruses). ESCRT-III proteins are believed to mediate the necessary vesicle extrusion and/or membrane fission activities, possibly in conjunction with the AAA ATPase VPS4. Selectively binds to phosphatidylinositol 3,5-bisphosphate PtdIns(3,5)P2 and PtdIns(3,4)P2 in preference to other phosphoinositides tested. Involved in late stages of cytokinesis. Plays a role in endosomal sorting/trafficking of EGF receptor. The protein is Charged multivesicular body protein 3 (CHMP3) of Pongo abelii (Sumatran orangutan).